The sequence spans 843 residues: INO80 complex subunit D-B (843 aa).

Over residues 159 to 175 (TLNHKQKQQDHSVDTNH) the composition is skewed to basic and acidic residues. Disordered stretches follow at residues 159-216 (TLNH…PTVR), 221-240 (FKTS…STDN), 503-550 (YHHH…LPQG), 695-726 (SLLH…HLTD), and 791-843 (LSTP…TAAP). Polar residues-rich tracts occupy residues 176–187 (LRTSSLPSTLSH), 197–216 (RATQ…PTVR), and 221–231 (FKTSSSLQDTH). Basic residues predominate over residues 503 to 540 (YHHHQQIQRHRPLKKAKPPALSKKHKKKGKRGTQRRPQ). Over residues 705-717 (PPSPPSPQPPLTP) the composition is skewed to pro residues. A compositionally biased stretch (low complexity) spans 796–821 (QPSSALSALPQSSQTRSTTTSPTSQT).

This sequence belongs to the INO80D family. In terms of assembly, component of the chromatin-remodeling INO80 complex.

It localises to the nucleus. Functionally, putative regulatory component of the chromatin remodeling INO80 complex which is involved in transcriptional regulation, DNA replication and probably DNA repair. This is INO80 complex subunit D-B (ino80db) from Danio rerio (Zebrafish).